Here is a 370-residue protein sequence, read N- to C-terminus: Putative 8-amino-7-oxononanoate synthase (370 aa).

Arg20 lines the substrate pocket. 95–96 (GY) serves as a coordination point for pyridoxal 5'-phosphate. His120 is a substrate binding site. Residues Ser167, 192 to 195 (DDAH), and 223 to 226 (TLSK) each bind pyridoxal 5'-phosphate. Residue Lys226 is modified to N6-(pyridoxal phosphate)lysine. A substrate-binding site is contributed by Thr337.

The protein belongs to the class-II pyridoxal-phosphate-dependent aminotransferase family. BioF subfamily. As to quaternary structure, homodimer. It depends on pyridoxal 5'-phosphate as a cofactor.

The catalysed reaction is 6-carboxyhexanoyl-[ACP] + L-alanine + H(+) = (8S)-8-amino-7-oxononanoate + holo-[ACP] + CO2. Its pathway is cofactor biosynthesis; biotin biosynthesis. Catalyzes the decarboxylative condensation of pimeloyl-[acyl-carrier protein] and L-alanine to produce 8-amino-7-oxononanoate (AON), [acyl-carrier protein], and carbon dioxide. The polypeptide is Putative 8-amino-7-oxononanoate synthase (bioF) (Methanococcus vannielii (strain ATCC 35089 / DSM 1224 / JCM 13029 / OCM 148 / SB)).